The primary structure comprises 392 residues: Enoyl-[acyl-carrier-protein] reductase [NADH] (392 aa).

Residues 46–51 (GSSSGY), 72–73 (LE), 108–109 (DA), and 136–137 (VA) each bind NAD(+). Tyrosine 225 is a binding site for substrate. The active-site Proton donor is tyrosine 235. NAD(+) is bound by residues lysine 244 and 273–275 (LVT).

Belongs to the TER reductase family. In terms of assembly, monomer.

It catalyses the reaction a 2,3-saturated acyl-[ACP] + NAD(+) = a (2E)-enoyl-[ACP] + NADH + H(+). The protein operates within lipid metabolism; fatty acid biosynthesis. Involved in the final reduction of the elongation cycle of fatty acid synthesis (FAS II). Catalyzes the reduction of a carbon-carbon double bond in an enoyl moiety that is covalently linked to an acyl carrier protein (ACP). The chain is Enoyl-[acyl-carrier-protein] reductase [NADH] from Streptomyces avermitilis (strain ATCC 31267 / DSM 46492 / JCM 5070 / NBRC 14893 / NCIMB 12804 / NRRL 8165 / MA-4680).